A 364-amino-acid polypeptide reads, in one-letter code: tRNA(Met) cytidine acetate ligase (364 aa).

ATP-binding positions include 7 to 20 (IAEF…HKYL), G96, N152, and R175.

It belongs to the TmcAL family.

It is found in the cytoplasm. The enzyme catalyses cytidine(34) in elongator tRNA(Met) + acetate + ATP = N(4)-acetylcytidine(34) in elongator tRNA(Met) + AMP + diphosphate. Catalyzes the formation of N(4)-acetylcytidine (ac(4)C) at the wobble position of elongator tRNA(Met), using acetate and ATP as substrates. First activates an acetate ion to form acetyladenylate (Ac-AMP) and then transfers the acetyl group to tRNA to form ac(4)C34. This Streptococcus sanguinis (strain SK36) protein is tRNA(Met) cytidine acetate ligase.